A 429-amino-acid polypeptide reads, in one-letter code: Histidine--tRNA ligase (429 aa).

Belongs to the class-II aminoacyl-tRNA synthetase family. As to quaternary structure, homodimer.

Its subcellular location is the cytoplasm. It catalyses the reaction tRNA(His) + L-histidine + ATP = L-histidyl-tRNA(His) + AMP + diphosphate + H(+). The polypeptide is Histidine--tRNA ligase (Pseudomonas putida (strain GB-1)).